The primary structure comprises 350 residues: Gene 40 protein (350 aa).

Residue 237–244 (AVKESGKT) coordinates ATP.

In Bacillus phage SP01 (Bacteriophage SP01), this protein is Gene 40 protein (40).